The following is a 195-amino-acid chain: Large ribosomal subunit protein eL15 (195 aa).

The disordered stretch occupies residues 174 to 195 (GHGRLGSAKSRPSIRANGRLRR).

It belongs to the eukaryotic ribosomal protein eL15 family.

This is Large ribosomal subunit protein eL15 from Picrophilus torridus (strain ATCC 700027 / DSM 9790 / JCM 10055 / NBRC 100828 / KAW 2/3).